The primary structure comprises 85 residues: METLLSFSAIAVGIIVGLASLGTAIGFAILGGKFLEGAARQPEMAPMLQVKMFIIAGLLDAVPMIGIVIALLFTFANPFVGQLAG.

2 helical membrane-spanning segments follow: residues 10 to 30 (IAVG…FAIL) and 53 to 73 (FIIA…ALLF).

It belongs to the ATPase C chain family. F-type ATPases have 2 components, F(1) - the catalytic core - and F(0) - the membrane proton channel. F(1) has five subunits: alpha(3), beta(3), gamma(1), delta(1), epsilon(1). F(0) has three main subunits: a(1), b(2) and c(10-14). The alpha and beta chains form an alternating ring which encloses part of the gamma chain. F(1) is attached to F(0) by a central stalk formed by the gamma and epsilon chains, while a peripheral stalk is formed by the delta and b chains.

The protein localises to the cell inner membrane. Functionally, f(1)F(0) ATP synthase produces ATP from ADP in the presence of a proton or sodium gradient. F-type ATPases consist of two structural domains, F(1) containing the extramembraneous catalytic core and F(0) containing the membrane proton channel, linked together by a central stalk and a peripheral stalk. During catalysis, ATP synthesis in the catalytic domain of F(1) is coupled via a rotary mechanism of the central stalk subunits to proton translocation. Key component of the F(0) channel; it plays a direct role in translocation across the membrane. A homomeric c-ring of between 10-14 subunits forms the central stalk rotor element with the F(1) delta and epsilon subunits. This is ATP synthase subunit c from Aliivibrio salmonicida (strain LFI1238) (Vibrio salmonicida (strain LFI1238)).